The sequence spans 284 residues: Probable palmitoyltransferase ZDHHC24 (284 aa).

Over 1 to 18 (MGQPWAAGSTDGAPAQLP) the chain is Cytoplasmic. The helical transmembrane segment at 19-39 (LVLTALWAAAVGLELAYVLVL) threads the bilayer. Residues 40 to 52 (GPGPPPLGPLARA) lie on the Extracellular side of the membrane. A helical membrane pass occupies residues 53–73 (LQLALAAFQLLNLLGNVGLFL). Over 74 to 137 (RSDPSIRGVM…GRCVGFGNYR (64 aa)) the chain is Cytoplasmic. Residues 94–144 (AYCYQCQSQVPPRSGHCSACRVCILRRDHHCRLLGRCVGFGNYRPFLCLLL) form the DHHC domain. Residue C124 is the S-palmitoyl cysteine intermediate of the active site. A helical membrane pass occupies residues 138–158 (PFLCLLLHAAGVLLHVSVLLG). The Extracellular portion of the chain corresponds to 159–166 (PALSALLR). A helical transmembrane segment spans residues 167-187 (AHTPLHMAALLLLPWLMLLTG). Residues 188-201 (RVSLAQFALAFVTD) are Cytoplasmic-facing. A helical membrane pass occupies residues 202–222 (TCVAGALLCGAGLLFHGMLLL). Residues 223–284 (RGQTTWEWAR…TTADVGHTAS (62 aa)) lie on the Extracellular side of the membrane.

The protein belongs to the DHHC palmitoyltransferase family.

The protein resides in the membrane. The enzyme catalyses L-cysteinyl-[protein] + hexadecanoyl-CoA = S-hexadecanoyl-L-cysteinyl-[protein] + CoA. Functionally, probable palmitoyltransferase that could catalyze the addition of palmitate onto various protein substrates. The polypeptide is Probable palmitoyltransferase ZDHHC24 (Homo sapiens (Human)).